Reading from the N-terminus, the 265-residue chain is uncharacterized protein (265 aa).

A helical membrane pass occupies residues 1 to 21 (MAFNNSTIIIIIVIAFAFFLI). N-linked (GlcNAc...) asparagine; by host glycans are attached at residues N74 and N142.

The protein resides in the host membrane. The protein localises to the virion. This is an uncharacterized protein from Acanthamoeba polyphaga mimivirus (APMV).